A 182-amino-acid chain; its full sequence is Bifunctional protein PyrR (182 aa).

A PRPP-binding motif is present at residues 97-109; the sequence is VVLVDDVIFRGRT.

Belongs to the purine/pyrimidine phosphoribosyltransferase family. PyrR subfamily.

The enzyme catalyses UMP + diphosphate = 5-phospho-alpha-D-ribose 1-diphosphate + uracil. In terms of biological role, regulates the transcription of the pyrimidine nucleotide (pyr) operon in response to exogenous pyrimidines. Also displays a weak uracil phosphoribosyltransferase activity which is not physiologically significant. The polypeptide is Bifunctional protein PyrR (Synechococcus sp. (strain JA-2-3B'a(2-13)) (Cyanobacteria bacterium Yellowstone B-Prime)).